The primary structure comprises 371 residues: MRRALLLAALLACAPPAFADRLKDLTTVAGVRSNPLVGYGVVVGLSGTGDGNSQLTQQSMQSLISRLGLSVETGDLKAKNAAAVMVTADLPPFLKIGQTLDVTVSTVGQAKSLKGGTLLMTPLMGADGEVYAIAQGNLVVGGLGVEGKDGSSLTVNIPTVGRVPRGGMVEKMVETPFLETDHLVLNLNRGDFSTAAAVAEGVNRTFGPDVAVALDGTSIRVRAPADPARRVSFMSLLENVEVDPAPPVARVVVNARTGTVVIGGTVKVTPAAVTHGSLTVRVTEDQRVSQGASVVVGNNATVVAPGEPVVTPDSQVQVVEEPAKAFVFDPGVSLSSLVDAINAVGASPSDLVAILEALREAGALRAELVVI.

Positions methionine 1–alanine 19 are cleaved as a signal peptide.

Belongs to the FlgI family. In terms of assembly, the basal body constitutes a major portion of the flagellar organelle and consists of four rings (L,P,S, and M) mounted on a central rod.

Its subcellular location is the periplasm. It localises to the bacterial flagellum basal body. Functionally, assembles around the rod to form the L-ring and probably protects the motor/basal body from shearing forces during rotation. The polypeptide is Flagellar P-ring protein 1 (Cereibacter sphaeroides (strain ATCC 17023 / DSM 158 / JCM 6121 / CCUG 31486 / LMG 2827 / NBRC 12203 / NCIMB 8253 / ATH 2.4.1.) (Rhodobacter sphaeroides)).